Reading from the N-terminus, the 336-residue chain is Transmembrane protease serine 12 (336 aa).

Positions 1-18 (MASWALSAALLCLGGAFA) are cleaved as a signal peptide. The Extracellular segment spans residues 19 to 312 (YSELHSLSLR…HYLSQGNINR (294 aa)). A Peptidase S1 domain is found at 66–306 (IIGGSQADTG…FQEWMTHYLS (241 aa)). C95 and C111 are joined by a disulfide. Catalysis depends on charge relay system residues H110 and D159. Intrachain disulfides connect C194/C262, C225/C241, and C252/C282. N-linked (GlcNAc...) asparagine glycosylation is found at N207, N237, and N246. S256 functions as the Charge relay system in the catalytic mechanism. Residues 313–333 (LFNMDIVLGQVLTALGSVILL) traverse the membrane as a helical segment. Residues 334–336 (GVT) lie on the Cytoplasmic side of the membrane.

This sequence belongs to the peptidase S1 family. As to expression, exclusively expressed in the testis, from spermatocytes to elongated spermatids (at protein level).

Its subcellular location is the cell membrane. It localises to the cytoplasmic vesicle. The protein resides in the secretory vesicle. The protein localises to the acrosome. In terms of biological role, required for male fertility. Plays a critical role in sperm capacitation and acrosome reactions during fertilization, and also plays a role in the regulation of proteins involved in spermatogenesis. Regulates protein pathways that promote chromosomal synapsis formation, double-strand break repair, formation of the inner mitochondrial membrane cristae and apoptosis in developing sperm. Required for normal sperm motility and binding to the zona pellucida, potentially via a role in ADAM3 protein maturation. The protein is Transmembrane protease serine 12 of Mus musculus (Mouse).